Here is a 307-residue protein sequence, read N- to C-terminus: ADP,ATP carrier protein 3 (307 aa).

Solcar repeat units lie at residues 10–103 (TNFA…IKLM), 114–206 (KWFA…LKPL), and 214–300 (GSFL…LQMI). Transmembrane regions (helical) follow at residues 12–39 (FAIN…VKIL), 80–104 (TANV…KLMF), 112–132 (YGKW…LSLL), 182–203 (FMPS…FDSL), and 217–237 (LASF…SYPL). ADP contacts are provided by arginine 85 and lysine 97. Arginine 241 lines the ADP pocket. The tract at residues 241 to 246 (RRRMMM) is important for transport activity. The short motif at 241–246 (RRRMMM) is the Nucleotide carrier signature motif element. A helical membrane pass occupies residues 277-297 (CGANILRSVAGAGVISMYDQL).

It belongs to the mitochondrial carrier (TC 2.A.29) family. As to quaternary structure, monomer.

It is found in the mitochondrion inner membrane. It carries out the reaction ADP(in) + ATP(out) = ADP(out) + ATP(in). The matrix-open state (m-state) is inhibited by the membrane-permeable bongkrekic acid (BKA). The cytoplasmic-open state (c-state) is inhibited by the membrane-impermeable toxic inhibitor carboxyatractyloside (CATR). Functionally, ADP:ATP antiporter that mediates import of ADP into the mitochondrial matrix for ATP synthesis, and export of ATP out to fuel the cell. Cycles between the cytoplasmic-open state (c-state) and the matrix-open state (m-state): operates by the alternating access mechanism with a single substrate-binding site intermittently exposed to either the cytosolic (c-state) or matrix (m-state) side of the inner mitochondrial membrane. The protein is ADP,ATP carrier protein 3 (AAC3) of Saccharomyces cerevisiae (strain ATCC 204508 / S288c) (Baker's yeast).